We begin with the raw amino-acid sequence, 372 residues long: Mevalonate 3,5-bisphosphate decarboxylase (372 aa).

It belongs to the mevalonate 3,5-bisphosphate decarboxylase family. As to quaternary structure, homodimer.

It catalyses the reaction (R)-3,5-bisphosphomevalonate + H(+) = isopentenyl phosphate + phosphate + CO2. It participates in isoprenoid biosynthesis; isopentenyl diphosphate biosynthesis via mevalonate pathway. Its function is as follows. Catalyzes the ATP-independent decarboxylation of (R)-mevalonate 3,5-bisphosphate to isopentenyl phosphate. Functions in an alternative mevalonate pathway, only present in extreme acidophiles of the Thermoplasmatales order, which passes through mevalonate 3-phosphate rather than mevalonate 5-phosphate. The chain is Mevalonate 3,5-bisphosphate decarboxylase from Thermoplasma volcanium (strain ATCC 51530 / DSM 4299 / JCM 9571 / NBRC 15438 / GSS1).